The chain runs to 523 residues: 2-isopropylmalate synthase (523 aa).

The 263-residue stretch at 5–267 (VIIFDTTLRD…HTNINHHEIW (263 aa)) folds into the Pyruvate carboxyltransferase domain. The Mn(2+) site is built by Asp-14, His-202, His-204, and Asn-238. The tract at residues 392–523 (RLDYFSVQSG…QNKENNKETV (132 aa)) is regulatory domain.

This sequence belongs to the alpha-IPM synthase/homocitrate synthase family. LeuA type 1 subfamily. In terms of assembly, homodimer. It depends on Mn(2+) as a cofactor.

The protein localises to the cytoplasm. The enzyme catalyses 3-methyl-2-oxobutanoate + acetyl-CoA + H2O = (2S)-2-isopropylmalate + CoA + H(+). It participates in amino-acid biosynthesis; L-leucine biosynthesis; L-leucine from 3-methyl-2-oxobutanoate: step 1/4. Its function is as follows. Catalyzes the condensation of the acetyl group of acetyl-CoA with 3-methyl-2-oxobutanoate (2-ketoisovalerate) to form 3-carboxy-3-hydroxy-4-methylpentanoate (2-isopropylmalate). The protein is 2-isopropylmalate synthase of Salmonella choleraesuis (strain SC-B67).